Reading from the N-terminus, the 197-residue chain is Protein shisa-4 (197 aa).

The first 27 residues, 1–27, serve as a signal peptide directing secretion; it reads MPPAGLRRAAPLTAIALLVLGAPLVLA. Topologically, residues 28 to 87 are extracellular; that stretch reads GEDCLWYLDRNGSWHPGFNCEFFTFCCGTCYHRYCCRDLTLLITERQQKHCLAFSPKTIA. The chain crosses the membrane as a helical span at residues 88 to 108; the sequence is GIASAVILFVAVVATTICCFL. Over 109–197 the chain is Cytoplasmic; the sequence is CSCCYLYRRR…MPPQPSYPGA (89 aa).

Belongs to the shisa family.

It is found in the membrane. The sequence is that of Protein shisa-4 (SHISA4) from Homo sapiens (Human).